Reading from the N-terminus, the 355-residue chain is Isopentenyl-diphosphate delta-isomerase (355 aa).

6-7 lines the substrate pocket; that stretch reads RK. Residues 62–64, serine 93, and asparagine 122 each bind FMN; that span reads AMT. Glutamine 152 is a substrate binding site. Glutamate 153 lines the Mg(2+) pocket. FMN-binding positions include lysine 184, threonine 214, 258–259, and 280–281; these read GG and AG.

Belongs to the IPP isomerase type 2 family. As to quaternary structure, homooctamer. Dimer of tetramers. Requires FMN as cofactor. NADPH serves as cofactor. Mg(2+) is required as a cofactor.

It localises to the cytoplasm. The catalysed reaction is isopentenyl diphosphate = dimethylallyl diphosphate. Functionally, involved in the biosynthesis of isoprenoids. Catalyzes the 1,3-allylic rearrangement of the homoallylic substrate isopentenyl (IPP) to its allylic isomer, dimethylallyl diphosphate (DMAPP). The chain is Isopentenyl-diphosphate delta-isomerase from Bacillus pumilus (strain SAFR-032).